A 431-amino-acid chain; its full sequence is Histidinol dehydrogenase (431 aa).

Tyrosine 130, glutamine 192, and asparagine 215 together coordinate NAD(+). Serine 238, glutamine 260, and histidine 263 together coordinate substrate. Zn(2+) contacts are provided by glutamine 260 and histidine 263. Active-site proton acceptor residues include glutamate 328 and histidine 329. Substrate-binding residues include histidine 329, aspartate 362, glutamate 416, and histidine 421. Aspartate 362 lines the Zn(2+) pocket. A Zn(2+)-binding site is contributed by histidine 421.

The protein belongs to the histidinol dehydrogenase family. The cofactor is Zn(2+).

It carries out the reaction L-histidinol + 2 NAD(+) + H2O = L-histidine + 2 NADH + 3 H(+). It functions in the pathway amino-acid biosynthesis; L-histidine biosynthesis; L-histidine from 5-phospho-alpha-D-ribose 1-diphosphate: step 9/9. Functionally, catalyzes the sequential NAD-dependent oxidations of L-histidinol to L-histidinaldehyde and then to L-histidine. The protein is Histidinol dehydrogenase of Thermosynechococcus vestitus (strain NIES-2133 / IAM M-273 / BP-1).